The sequence spans 494 residues: Rho GTPase-activating protein 19 (494 aa).

Ala-2 is subject to N-acetylalanine. A phosphoserine mark is found at Ser-7 and Ser-31. Residues Met-102–Phe-308 enclose the Rho-GAP domain. 2 disordered regions span residues Lys-349–His-368 and Gln-399–Arg-421. Residues Asn-354–His-368 are compositionally biased toward basic and acidic residues. Residues Gln-399 to Gln-415 show a composition bias toward polar residues. Residues Ser-422, Ser-438, and Ser-470 each carry the phosphoserine modification. Thr-478 carries the phosphothreonine modification.

As to expression, strong expression in fetal heart, brain, placenta, lung, liver, skeletal muscle, kidney and pancreas. Weak expression in adult pancreas, spleen, thymus, and ovary.

The protein localises to the nucleus. In terms of biological role, GTPase activator for the Rho-type GTPases by converting them to an inactive GDP-bound state. The polypeptide is Rho GTPase-activating protein 19 (ARHGAP19) (Homo sapiens (Human)).